We begin with the raw amino-acid sequence, 265 residues long: Phosphonates import ATP-binding protein PhnC (265 aa).

One can recognise an ABC transporter domain in the interval 3–247; that stretch reads LRLKQAFLHH…MLDTLYANEQ (245 aa). An ATP-binding site is contributed by 36 to 43; it reads GPSGAGKS.

The protein belongs to the ABC transporter superfamily. Phosphonates importer (TC 3.A.1.9.1) family. As to quaternary structure, the complex is composed of two ATP-binding proteins (PhnC), two transmembrane proteins (PhnE) and a solute-binding protein (PhnD).

The protein localises to the cell inner membrane. It carries out the reaction phosphonate(out) + ATP + H2O = phosphonate(in) + ADP + phosphate + H(+). Its function is as follows. Part of the ABC transporter complex PhnCDE involved in phosphonates import. Responsible for energy coupling to the transport system. This chain is Phosphonates import ATP-binding protein PhnC, found in Pseudomonas fluorescens (strain Pf0-1).